Reading from the N-terminus, the 206-residue chain is MVEKQKINEVIVVEGRDDTANLKRYFDCETYETGGSSIDDRDLERLKRLEDKRGIIVFTDPDFQGERIRKIIMQAVPNAKHAFLNRDEARPKGKGSLGVEHANFEALNQALAEVFGGEKVTDEFGSAKTQEPSSDRSSVSKKELLTELTQTDLMSFGLVMAADSRKRREFLCEQLRIGYANGKQIKKRLNMFKITKEQIENVMKNY.

In terms of domain architecture, Toprim spans 8 to 91 (NEVIVVEGRD…AFLNRDEARP (84 aa)). Residues glutamate 14, aspartate 60, and aspartate 62 each coordinate Mg(2+).

Belongs to the ribonuclease M5 family. Mg(2+) is required as a cofactor.

It is found in the cytoplasm. The catalysed reaction is Endonucleolytic cleavage of RNA, removing 21 and 42 nucleotides, respectively, from the 5'- and 3'-termini of a 5S-rRNA precursor.. In terms of biological role, required for correct processing of both the 5' and 3' ends of 5S rRNA precursor. Cleaves both sides of a double-stranded region yielding mature 5S rRNA in one step. The chain is Ribonuclease M5 from Lactococcus lactis subsp. lactis (strain IL1403) (Streptococcus lactis).